The following is a 171-amino-acid chain: Adenine phosphoribosyltransferase (171 aa).

This sequence belongs to the purine/pyrimidine phosphoribosyltransferase family. In terms of assembly, homodimer.

The protein localises to the cytoplasm. It carries out the reaction AMP + diphosphate = 5-phospho-alpha-D-ribose 1-diphosphate + adenine. The protein operates within purine metabolism; AMP biosynthesis via salvage pathway; AMP from adenine: step 1/1. In terms of biological role, catalyzes a salvage reaction resulting in the formation of AMP, that is energically less costly than de novo synthesis. The protein is Adenine phosphoribosyltransferase of Geotalea uraniireducens (strain Rf4) (Geobacter uraniireducens).